Reading from the N-terminus, the 70-residue chain is Small ribosomal subunit protein bS21 (70 aa).

This sequence belongs to the bacterial ribosomal protein bS21 family.

This Albidiferax ferrireducens (strain ATCC BAA-621 / DSM 15236 / T118) (Rhodoferax ferrireducens) protein is Small ribosomal subunit protein bS21.